A 298-amino-acid polypeptide reads, in one-letter code: 1D-myo-inositol 2-acetamido-2-deoxy-alpha-D-glucopyranoside deacetylase (298 aa).

Zn(2+) contacts are provided by His-14, Asp-17, and His-148. A disordered region spans residues 277-298 (RGPAGPDGREHDLFAGLDGPAT).

It belongs to the MshB deacetylase family. Zn(2+) is required as a cofactor.

The enzyme catalyses 1D-myo-inositol 2-acetamido-2-deoxy-alpha-D-glucopyranoside + H2O = 1D-myo-inositol 2-amino-2-deoxy-alpha-D-glucopyranoside + acetate. Catalyzes the deacetylation of 1D-myo-inositol 2-acetamido-2-deoxy-alpha-D-glucopyranoside (GlcNAc-Ins) in the mycothiol biosynthesis pathway. The protein is 1D-myo-inositol 2-acetamido-2-deoxy-alpha-D-glucopyranoside deacetylase of Nocardia farcinica (strain IFM 10152).